A 391-amino-acid polypeptide reads, in one-letter code: Mannonate dehydratase (391 aa).

This sequence belongs to the mannonate dehydratase family. Fe(2+) serves as cofactor. Mn(2+) is required as a cofactor.

It catalyses the reaction D-mannonate = 2-dehydro-3-deoxy-D-gluconate + H2O. The protein operates within carbohydrate metabolism; pentose and glucuronate interconversion. Functionally, catalyzes the dehydration of D-mannonate. The polypeptide is Mannonate dehydratase (Marinomonas sp. (strain MWYL1)).